The chain runs to 51 residues: uncharacterized protein (51 aa).

Residues 1 to 51 (MKRKAEVNEAIKNNNTPTESMDPNSYKTQYHDDPNFRGANRNSKQGQQGGM) are disordered. Composition is skewed to polar residues over residues 11 to 28 (IKNNNTPTESMDPNSYKT) and 40 to 51 (NRNSKQGQQGGM).

This is an uncharacterized protein from Bacillus subtilis (strain 168).